A 119-amino-acid chain; its full sequence is UPF0102 protein HI_1656 (119 aa).

This sequence belongs to the UPF0102 family.

This chain is UPF0102 protein HI_1656, found in Haemophilus influenzae (strain ATCC 51907 / DSM 11121 / KW20 / Rd).